We begin with the raw amino-acid sequence, 379 residues long: Arginine biosynthesis bifunctional protein ArgJ (379 aa).

6 residues coordinate substrate: threonine 141, lysine 163, threonine 174, glutamate 252, asparagine 374, and threonine 379. Catalysis depends on threonine 174, which acts as the Nucleophile.

It belongs to the ArgJ family. Heterotetramer of two alpha and two beta chains.

It is found in the cytoplasm. It catalyses the reaction N(2)-acetyl-L-ornithine + L-glutamate = N-acetyl-L-glutamate + L-ornithine. The catalysed reaction is L-glutamate + acetyl-CoA = N-acetyl-L-glutamate + CoA + H(+). The protein operates within amino-acid biosynthesis; L-arginine biosynthesis; L-ornithine and N-acetyl-L-glutamate from L-glutamate and N(2)-acetyl-L-ornithine (cyclic): step 1/1. It functions in the pathway amino-acid biosynthesis; L-arginine biosynthesis; N(2)-acetyl-L-ornithine from L-glutamate: step 1/4. Catalyzes two activities which are involved in the cyclic version of arginine biosynthesis: the synthesis of N-acetylglutamate from glutamate and acetyl-CoA as the acetyl donor, and of ornithine by transacetylation between N(2)-acetylornithine and glutamate. The sequence is that of Arginine biosynthesis bifunctional protein ArgJ from Aquifex aeolicus (strain VF5).